The sequence spans 343 residues: Glyceraldehyde-3-phosphate dehydrogenase 1 (343 aa).

NAD(+) is bound by residues 13-14, D35, R79, and S121; that span reads RI. D-glyceraldehyde 3-phosphate is bound by residues 154–156, T185, 214–215, and R237; these read SCT and TG. C155 serves as the catalytic Nucleophile. N319 lines the NAD(+) pocket.

It belongs to the glyceraldehyde-3-phosphate dehydrogenase family. Homotetramer.

The protein resides in the cytoplasm. The enzyme catalyses D-glyceraldehyde 3-phosphate + phosphate + NAD(+) = (2R)-3-phospho-glyceroyl phosphate + NADH + H(+). The protein operates within carbohydrate degradation; glycolysis; pyruvate from D-glyceraldehyde 3-phosphate: step 1/5. In terms of biological role, catalyzes the oxidative phosphorylation of glyceraldehyde 3-phosphate (G3P) to 1,3-bisphosphoglycerate (BPG) using the cofactor NAD. The first reaction step involves the formation of a hemiacetal intermediate between G3P and a cysteine residue, and this hemiacetal intermediate is then oxidized to a thioester, with concomitant reduction of NAD to NADH. The reduced NADH is then exchanged with the second NAD, and the thioester is attacked by a nucleophilic inorganic phosphate to produce BPG. The protein is Glyceraldehyde-3-phosphate dehydrogenase 1 (gap1) of Nostoc sp. (strain PCC 7120 / SAG 25.82 / UTEX 2576).